The following is a 361-amino-acid chain: Phospho-N-acetylmuramoyl-pentapeptide-transferase (361 aa).

The next 10 membrane-spanning stretches (helical) occupy residues 25–45, 72–92, 95–115, 135–155, 169–189, 200–220, 240–260, 264–284, 289–309, and 338–358; these read TGGA…WIID, TPTM…VLWA, LNPY…VGFY, LLIE…LGRA, VMLN…VGAG, GLAI…SYLA, LAVL…FNAP, IFMG…IAVA, IVLA…IVQV, and QIVI…LSTL.

It belongs to the glycosyltransferase 4 family. MraY subfamily. Mg(2+) serves as cofactor.

The protein resides in the cell inner membrane. The enzyme catalyses UDP-N-acetyl-alpha-D-muramoyl-L-alanyl-gamma-D-glutamyl-meso-2,6-diaminopimeloyl-D-alanyl-D-alanine + di-trans,octa-cis-undecaprenyl phosphate = di-trans,octa-cis-undecaprenyl diphospho-N-acetyl-alpha-D-muramoyl-L-alanyl-D-glutamyl-meso-2,6-diaminopimeloyl-D-alanyl-D-alanine + UMP. It functions in the pathway cell wall biogenesis; peptidoglycan biosynthesis. In terms of biological role, catalyzes the initial step of the lipid cycle reactions in the biosynthesis of the cell wall peptidoglycan: transfers peptidoglycan precursor phospho-MurNAc-pentapeptide from UDP-MurNAc-pentapeptide onto the lipid carrier undecaprenyl phosphate, yielding undecaprenyl-pyrophosphoryl-MurNAc-pentapeptide, known as lipid I. The sequence is that of Phospho-N-acetylmuramoyl-pentapeptide-transferase from Rhodopseudomonas palustris (strain TIE-1).